A 416-amino-acid chain; its full sequence is MRLAPQKPLLLSTVLHLLLSIWMLGFASLAGATVQEPLAASDTPKPVSAALFSSIERLSRLVDITYCVGNTGVWKPFACASRCNEFPTLTLERTWRTGILMSDSCGLIAVDHGTPRHDAGEGKDDPLAEKAIIVAFRGTYSLTNTIIDLSTIPQEYVPYPSPDDGGNEPPREPSHRCDNCTVHSGFLASWRHARKVVLPELKVLRQKYPEYPIRLVGHSLGGAVAMLAALEMRVSLGWRDTVVTTFGEPRVGNRQLCDYLNAVFELNLGDEMDPAEREYRRVTHADDPVPLLPPAEWGYSSHGGEFFISKKDLPPSVEDVLVCHGDHDENCIARGKSSAVSVPAGDYDDALSTLEEQDVMLADALPWIPARLKLWELFFAHRDYFWRLGLCVPGGDPANWGRKGGEGAAESISAEG.

The signal sequence occupies residues 1-32; sequence MRLAPQKPLLLSTVLHLLLSIWMLGFASLAGA. Intrachain disulfides connect Cys67/Cys391 and Cys177/Cys180. Asn179 is a glycosylation site (N-linked (GlcNAc...) asparagine). The Nucleophile role is filled by Ser219. Active-site charge relay system residues include Asp287 and His381.

It belongs to the AB hydrolase superfamily. Lipase family. In terms of processing, glycosylated.

It localises to the secreted. The catalysed reaction is Deacetylation of xylans and xylo-oligosaccharides.. The enzyme catalyses a triacylglycerol + H2O = a diacylglycerol + a fatty acid + H(+). Functionally, lipolytic enzyme that possesses both lipase and acetylxylan esterase activity. Active towards p-nitrophenol esters of various carbon chain length with preference for medium-chain fatty acids (C-8). Also highly active on the acetylated compounds xylose tetra-acetate and oat spelt xylan. This is Lipase A from Sodiomyces alcalophilus (Acremonium alcalophilum).